The primary structure comprises 206 residues: Small ribosomal subunit protein uS4 (206 aa).

The 64-residue stretch at 93 to 156 folds into the S4 RNA-binding domain; the sequence is CRLDNLVYRL…RKIKIIAEAL (64 aa).

The protein belongs to the universal ribosomal protein uS4 family. Part of the 30S ribosomal subunit. Contacts protein S5. The interaction surface between S4 and S5 is involved in control of translational fidelity.

Its function is as follows. One of the primary rRNA binding proteins, it binds directly to 16S rRNA where it nucleates assembly of the body of the 30S subunit. In terms of biological role, with S5 and S12 plays an important role in translational accuracy. This is Small ribosomal subunit protein uS4 from Protochlamydia amoebophila (strain UWE25).